The primary structure comprises 1886 residues: Polyprotein P3 (1886 aa).

Disordered regions lie at residues 1 to 24 (MATR…SGVP), 420 to 466 (RCDS…MQDD), and 478 to 529 (RMKK…NQPE). A compositionally biased stretch (polar residues) spans 9–20 (VTQTDGSRTATE). The segment covering 488 to 498 (QQALSSQAQEE) has biased composition (low complexity). A CCHC-type zinc finger spans residues 879 to 896 (CKCYICGQEGHYANQCRN). The Peptidase A2 domain maps to 1215 to 1292 (INAIVDTGAT…GLSPGIQMII (78 aa)). Residue D1220 is the For protease activity of the active site. In terms of domain architecture, Reverse transcriptase spans 1425–1615 (LLQMKVIRPS…PEIDFLGASL (191 aa)). The RNase H type-1 domain maps to 1706–1841 (KDSFIIIETD…ADALSRMINF (136 aa)). Mg(2+)-binding residues include D1715, E1758, D1784, and D1833.

Polyprotein P3 is presumably proteolytically cleaved into several chains by viral protease.

The catalysed reaction is Endonucleolytic cleavage to 5'-phosphomonoester.. It catalyses the reaction DNA(n) + a 2'-deoxyribonucleoside 5'-triphosphate = DNA(n+1) + diphosphate. In terms of biological role, capsid protein self assembles to form a bacilliform capsid about 90-900 nm in length. The capsid encapsulates the genomic dsDNA. Following virus entry into host cell, provides nuclear import of the viral genome. Virus particles do not enter the nucleus, but are targeted to the nuclear membrane through the interaction with host importins. This Commelina yellow mottle virus (CoYMV) protein is Polyprotein P3.